A 120-amino-acid chain; its full sequence is NAD(P)H-quinone oxidoreductase subunit 3, chloroplastic (120 aa).

3 consecutive transmembrane segments (helical) span residues 9-29 (IFWT…WISG), 64-84 (MFAL…PWAM), and 88-108 (VLGV…VVGL).

Belongs to the complex I subunit 3 family. As to quaternary structure, NDH is composed of at least 16 different subunits, 5 of which are encoded in the nucleus.

The protein localises to the plastid. It localises to the chloroplast thylakoid membrane. It catalyses the reaction a plastoquinone + NADH + (n+1) H(+)(in) = a plastoquinol + NAD(+) + n H(+)(out). The catalysed reaction is a plastoquinone + NADPH + (n+1) H(+)(in) = a plastoquinol + NADP(+) + n H(+)(out). Its function is as follows. NDH shuttles electrons from NAD(P)H:plastoquinone, via FMN and iron-sulfur (Fe-S) centers, to quinones in the photosynthetic chain and possibly in a chloroplast respiratory chain. The immediate electron acceptor for the enzyme in this species is believed to be plastoquinone. Couples the redox reaction to proton translocation, and thus conserves the redox energy in a proton gradient. This is NAD(P)H-quinone oxidoreductase subunit 3, chloroplastic from Agrostis stolonifera (Creeping bentgrass).